Consider the following 313-residue polypeptide: Probable WRKY transcription factor 41 (313 aa).

Residues 135–203 constitute a DNA-binding region (WRKY); that stretch reads GLEGPHDDIF…YRGTHTCSQG (69 aa).

This sequence belongs to the WRKY group III family.

The protein localises to the nucleus. In terms of biological role, transcription factor. Interacts specifically with the W box (5'-(T)TGAC[CT]-3'), a frequently occurring elicitor-responsive cis-acting element. The protein is Probable WRKY transcription factor 41 (WRKY41) of Arabidopsis thaliana (Mouse-ear cress).